Consider the following 213-residue polypeptide: LexA repressor 2 (213 aa).

Residues 27-47 (QTEIARAFGFKGVRAAQYHLE) constitute a DNA-binding region (H-T-H motif). Catalysis depends on for autocatalytic cleavage activity residues serine 133 and lysine 170.

This sequence belongs to the peptidase S24 family. Homodimer.

The catalysed reaction is Hydrolysis of Ala-|-Gly bond in repressor LexA.. Functionally, represses a number of genes involved in the response to DNA damage (SOS response), including recA and lexA. In the presence of single-stranded DNA, RecA interacts with LexA causing an autocatalytic cleavage which disrupts the DNA-binding part of LexA, leading to derepression of the SOS regulon and eventually DNA repair. In Xanthomonas oryzae pv. oryzae (strain KACC10331 / KXO85), this protein is LexA repressor 2.